The chain runs to 348 residues: Trace amine-associated receptor 9 (348 aa).

At 1–33 (MTSDFSPEPPMELCYENVNGSCIKSSYAPWPRA) the chain is on the extracellular side. Residue Asn-19 is glycosylated (N-linked (GlcNAc...) asparagine). 2 cysteine pairs are disulfide-bonded: Cys-22-Cys-186 and Cys-105-Cys-190. The helical transmembrane segment at 34 to 58 (ILYGVLGLGALLAVFGNLLVIIAIL) threads the bilayer. Residues 59-68 (HFKQLHTPTN) lie on the Cytoplasmic side of the membrane. Residues 69–90 (FLVASLACADFLVGVTVMPFST) traverse the membrane as a helical segment. The Extracellular segment spans residues 91–105 (VRSVESCWYFGESYC). The helical transmembrane segment at 106–128 (KFHTCFDTSFCFASLFHLCCISI) threads the bilayer. 2 residues coordinate spermidine: Asp-112 and Thr-113. The Cytoplasmic portion of the chain corresponds to 129 to 148 (DRYIAVTDPLTYPTKFTVSV). Residues 149–170 (SGLCIALSWFFSVTYSFSIFYT) form a helical membrane-spanning segment. Residues 171-196 (GANEEGIEELVVALTCVGGCQAPLNQ) lie on the Extracellular side of the membrane. The tract at residues 174 to 187 (EEGIEELVVALTCV) is extracellular Loop 2 (ECL2). The helical transmembrane segment at 197–218 (NWVLLCFLLFFLPTVVMVFLYG) threads the bilayer. Residues 219–256 (RIFLVAKYQARKIEGTANQAQASSESYKERVAKRERKA) lie on the Cytoplasmic side of the membrane. Residues 257–280 (AKTLGIAMAAFLVSWLPYIIDAVI) traverse the membrane as a helical segment. The Extracellular segment spans residues 281 to 293 (DAYMNFITPAYVY). Residues 294–314 (EILVWCVYYNSAMNPLIYAFF) form a helical membrane-spanning segment. Topologically, residues 315–348 (YPWFRKAIKLIVSGKVFRADSSTTNLFSEEAGAG) are cytoplasmic.

This sequence belongs to the G-protein coupled receptor 1 family. As to expression, specifically expressed in neurons of the olfactory epithelium.

Its subcellular location is the cell membrane. Functionally, olfactory receptor specific for trace amines, such as triethylamine, N,N-dimethylcyclohexylamine (DMCHA), beta-phenylethylamine (beta-PEA), cadaverine (CAD) and polyamines such as spermine and spermidine. Trace amine compounds are enriched in animal body fluids and act on trace amine-associated receptors (TAARs) to elicit both intraspecific and interspecific innate behaviors. Trace amine-binding causes a conformation change that triggers signaling via G(s)-class of G alpha proteins (GNAL or GNAS). In mature olfactory sensory neurons, Taar9 is coupled with GNAL/G(olf)G alpha protein and mediates activation of adenylate cyclase activity to activate cAMP signaling and eventually transmit odorant signals to achieve membrane depolarization. In immature olfactory sensory neurons, Taar9 is coupled with GNAS/G(s) G alpha proteins. The protein is Trace amine-associated receptor 9 of Mus musculus (Mouse).